Here is a 363-residue protein sequence, read N- to C-terminus: UDP-N-acetylglucosamine--N-acetylmuramyl-(pentapeptide) pyrophosphoryl-undecaprenol N-acetylglucosamine transferase (363 aa).

Residues 12–14, R166, S196, and Q291 each bind UDP-N-acetyl-alpha-D-glucosamine; that span reads TAG.

The protein belongs to the glycosyltransferase 28 family. MurG subfamily.

The protein resides in the cell inner membrane. It catalyses the reaction di-trans,octa-cis-undecaprenyl diphospho-N-acetyl-alpha-D-muramoyl-L-alanyl-D-glutamyl-meso-2,6-diaminopimeloyl-D-alanyl-D-alanine + UDP-N-acetyl-alpha-D-glucosamine = di-trans,octa-cis-undecaprenyl diphospho-[N-acetyl-alpha-D-glucosaminyl-(1-&gt;4)]-N-acetyl-alpha-D-muramoyl-L-alanyl-D-glutamyl-meso-2,6-diaminopimeloyl-D-alanyl-D-alanine + UDP + H(+). The protein operates within cell wall biogenesis; peptidoglycan biosynthesis. Functionally, cell wall formation. Catalyzes the transfer of a GlcNAc subunit on undecaprenyl-pyrophosphoryl-MurNAc-pentapeptide (lipid intermediate I) to form undecaprenyl-pyrophosphoryl-MurNAc-(pentapeptide)GlcNAc (lipid intermediate II). The sequence is that of UDP-N-acetylglucosamine--N-acetylmuramyl-(pentapeptide) pyrophosphoryl-undecaprenol N-acetylglucosamine transferase from Legionella pneumophila (strain Paris).